Reading from the N-terminus, the 110-residue chain is Snake venom vascular endothelial growth factor toxin ICPP (110 aa).

Glutamine 1 bears the Pyrrolidone carboxylic acid mark. Disulfide bonds link cysteine 14–cysteine 56, cysteine 45–cysteine 91, and cysteine 49–cysteine 93.

As to quaternary structure, homodimer; disulfide-linked. Interacts with high affinity with KDR/VEGFR-2, and with a lower affinity with neuropilin-1 (NRP1) and neuropilin-2 (NRP2). In terms of tissue distribution, expressed by the venom gland.

It is found in the secreted. In terms of biological role, snake venom VEGFs may contribute to venom dispersion and prey subjugation by inducing vascular permeability and hypotension. This protein increases vascular permeability and angiogenesis probably through VEGF receptor (KDR/VEGFR-2) signaling. Induces DNA synthesis in human umbilical vein endothelial cells, and promotes mouse embryonic stem cell proliferation and differentiation. It may also induce a drastic hypotensive effect after intravenous injection. The hypotension is mediated by nitric oxide (NO), which is produced by VEGF-activated endothelium NO synthase. The sequence is that of Snake venom vascular endothelial growth factor toxin ICPP from Macrovipera lebetinus (Levantine viper).